A 254-amino-acid polypeptide reads, in one-letter code: 5-oxoprolinase subunit A (254 aa).

Belongs to the LamB/PxpA family. In terms of assembly, forms a complex composed of PxpA, PxpB and PxpC.

It catalyses the reaction 5-oxo-L-proline + ATP + 2 H2O = L-glutamate + ADP + phosphate + H(+). In terms of biological role, catalyzes the cleavage of 5-oxoproline to form L-glutamate coupled to the hydrolysis of ATP to ADP and inorganic phosphate. This chain is 5-oxoprolinase subunit A, found in Bacillus mycoides (strain KBAB4) (Bacillus weihenstephanensis).